Consider the following 742-residue polypeptide: Synaptic vesicle glycoprotein 2A (742 aa).

The tract at residues 1-57 (MEEGFRDRAAFIRGAKDIAKEVKKHAAKKVVKGLDRVQDEYSRRSYSRFEEEEDDDD) is interaction with SYT1. Topologically, residues 1-169 (MEEGFRDRAA…GHGRFQWTLY (169 aa)) are cytoplasmic. Basic and acidic residues predominate over residues 40–49 (EYSRRSYSRF). The interval 40–145 (EYSRRSYSRF…RGEAQRRKDR (106 aa)) is disordered. Phosphoserine occurs at positions 80 and 81. The residue at position 84 (Thr84) is a Phosphothreonine. Residues 122-137 (VRGGLSDGEGPPGGRG) are compositionally biased toward gly residues. Residue Ser127 is modified to Phosphoserine. A helical transmembrane segment spans residues 170–190 (FVLGLALMADGVEVFVVGFVL). Topologically, residues 191–205 (PSAEKDMCLSDSNKG) are extracellular. Residues 206–226 (MLGLIVYLGMMVGAFLWGGLA) form a helical membrane-spanning segment. The Cytoplasmic segment spans residues 227-233 (DRLGRRQ). A helical transmembrane segment spans residues 234–254 (CLLISLSVNSVFAFFSSFVQG). Residues 255 to 262 (YGTFLFCR) are Extracellular-facing. The chain crosses the membrane as a helical span at residues 263 to 283 (LLSGVGIGGSIPIVFSYFSEF). At 284 to 294 (LAQEKRGEHLS) the chain is on the cytoplasmic side. A helical membrane pass occupies residues 295–315 (WLCMFWMIGGVYAAAMAWAII). Residues 316-334 (PHYGWSFQMGSAYQFHSWR) lie on the Extracellular side of the membrane. A helical membrane pass occupies residues 335–355 (VFVLVCAFPSVFAIGALTTQP). At 356–447 (ESPRFFLENG…CFSPEYRRIT (92 aa)) the chain is on the cytoplasmic side. Ser393 carries the phosphoserine modification. The chain crosses the membrane as a helical span at residues 448–468 (LMMMGVWFTMSFSYYGLTVWF). The Extracellular portion of the chain corresponds to 469-598 (PDMIRHLQAV…GTGEGAYMVY (130 aa)). A Phosphotyrosine modification is found at Tyr480. 2 N-linked (GlcNAc...) asparagine glycosylation sites follow: Asn498 and Asn548. The N-linked (GlcNAc...) asparagine; alternate glycan is linked to Asn573. Asn573 is a glycosylation site (N-linked (HexNAc...) asparagine; alternate). Residues 599 to 619 (FVSFLGTLAVLPGNIVSALLM) traverse the membrane as a helical segment. The Cytoplasmic portion of the chain corresponds to 620 to 626 (DKIGRLR). The chain crosses the membrane as a helical span at residues 627–647 (MLAGSSVLSCVSCFFLSFGNS). Residues 648–651 (ESAM) lie on the Extracellular side of the membrane. The chain crosses the membrane as a helical span at residues 652–672 (IALLCLFGGVSIASWNALDVL). At 673–685 (TVELYPSDKRTTA) the chain is on the cytoplasmic side. Residues 686 to 708 (FGFLNALCKLAAVLGISIFTSFV) form a helical membrane-spanning segment. At 709–712 (GITK) the chain is on the extracellular side. The helical transmembrane segment at 713–731 (AAPILFASAALALGSSLAL) threads the bilayer. The Cytoplasmic portion of the chain corresponds to 732 to 742 (KLPETRGQVLQ).

The protein belongs to the major facilitator superfamily. In terms of assembly, interacts with SYT1/synaptotagmin-1 in a calcium-dependent manner. Binds the adapter protein complex AP-2. As to quaternary structure, (Microbial infection) Interacts with C.botulinum neurotoxin type A1 and type A2 (BoNT/A, botA). Interaction is improved by glycosylation of SV2. (Microbial infection) Copurifies with C.botulinum neurotoxin type B (BoNT/B, botB) and synaptotagmin 1 (SYT1). Interaction does not require glycosylation of SV2 or SYT1 proteins. Another group finds only copurification with SYT1 and SYT2. In terms of assembly, (Microbial infection) Interacts with C.botulinum neurotoxin type E (BoNT/E). Interaction requires glycosylation of SV2 proteins. As to quaternary structure, (Microbial infection) Copurifies with C.botulinum neurotoxin type F (BoNT/F) and synaptotagmin 1 (SYT2). Another group finds only copurification with BoNT/F. Interaction requires SV2 glycosylation. In terms of processing, phosphorylation by CK1 of the N-terminal cytoplasmic domain regulates interaction with SYT1. Post-translationally, N-glycosylated, on at least 3 residues. Widely expressed throughout the brain (at protein level). Expressed by neural and endocrine cells of brain and spinal cord.

It localises to the presynapse. The protein localises to the cytoplasmic vesicle. It is found in the secretory vesicle. The protein resides in the synaptic vesicle membrane. Its function is as follows. Plays a role in the control of regulated secretion in neural and endocrine cells, enhancing selectively low-frequency neurotransmission. Positively regulates vesicle fusion by maintaining the readily releasable pool of secretory vesicles. In terms of biological role, (Microbial infection) Receptor for C.botulinum neurotoxin type A (BoNT/A, botA); the toxin binds via extracellular loop 4. Restores uptake of BoNT/A in mouse cells that are deleted for SV2 receptor. Glycosylation of Asn-573 is not essential for receptor activity, but enhances uptake. Also serves as a receptor for the closely related C.botulinum neurotoxin type A2; glycosylation is not essential but enhances the interaction. Possible receptor for C.botulinum neurotoxin type D (BoNT/D, botD); BoNT/D does not bind to extracellular loop 4 as do BoNT/A and BoNT/E, nor to loop 1 or loop 3. Another group does not find a convincing interaction with SV2. Functionally, (Microbial infection) Receptor for C.botulinum neurotoxin type E (BoNT/E); the toxin probably binds via extracellular loop 4 and requires glycosylation of Asn-573. Restores uptake of BoNT/E in mouse cells that are deleted for SV2 receptor. Its function is as follows. (Microbial infection) Receptor for C.botulinum neurotoxin type F (BoNT/F). Binding requires glycosylation of Asn-573. This is Synaptic vesicle glycoprotein 2A (Sv2a) from Rattus norvegicus (Rat).